The following is a 49-amino-acid chain: Large ribosomal subunit protein bL33 (49 aa).

This sequence belongs to the bacterial ribosomal protein bL33 family.

This is Large ribosomal subunit protein bL33 from Alkaliphilus oremlandii (strain OhILAs) (Clostridium oremlandii (strain OhILAs)).